The sequence spans 347 residues: MEGIFAAYVLPALIIALKSVVLLVVLLIVVAYLLYADRKIWAAVQLRRGPNVVGPWGLFQRFADLLKFVFKEPIIPSGANKGVFLLAPFIFAVLAMATWAVIPVNEGWAVANINVGILYIFAISSLEVYGVIMGGWASNSKYPFLGALRSAAQMVSYEVSIGFVIVTVLLTVGSLNLTDIVLSQNTGLGTMLGLPASFLDWNWLCLFPMFVVFFISALAETNRPPFDLVEAESELVAGHMIEYSSTPFLLFFLGEYVAITLMCALMTVLFLGGWLPPVDVWFLSWVPGIIWFMLKLCFCFFLFAMVKAFVPRYRYDQLMRLGWKVFLPISLFMVVATATFLKVFGLA.

8 consecutive transmembrane segments (helical) span residues 13 to 33 (LIIA…VAYL), 82 to 102 (GVFL…WAVI), 115 to 135 (VGIL…IMGG), 161 to 181 (IGFV…TDIV), 198 to 218 (FLDW…ISAL), 248 to 268 (FLLF…LMTV), 286 to 306 (VPGI…FAMV), and 325 to 345 (VFLP…KVFG).

This sequence belongs to the complex I subunit 1 family. As to quaternary structure, NDH-1 is composed of 14 different subunits. Subunits NuoA, H, J, K, L, M, N constitute the membrane sector of the complex.

It is found in the cell inner membrane. It catalyses the reaction a quinone + NADH + 5 H(+)(in) = a quinol + NAD(+) + 4 H(+)(out). NDH-1 shuttles electrons from NADH, via FMN and iron-sulfur (Fe-S) centers, to quinones in the respiratory chain. The immediate electron acceptor for the enzyme in this species is believed to be ubiquinone. Couples the redox reaction to proton translocation (for every two electrons transferred, four hydrogen ions are translocated across the cytoplasmic membrane), and thus conserves the redox energy in a proton gradient. This subunit may bind ubiquinone. In Brucella melitensis biotype 1 (strain ATCC 23456 / CCUG 17765 / NCTC 10094 / 16M), this protein is NADH-quinone oxidoreductase subunit H.